The primary structure comprises 481 residues: Aspartyl/glutamyl-tRNA(Asn/Gln) amidotransferase subunit B (481 aa).

Belongs to the GatB/GatE family. GatB subfamily. In terms of assembly, heterotrimer of A, B and C subunits.

It carries out the reaction L-glutamyl-tRNA(Gln) + L-glutamine + ATP + H2O = L-glutaminyl-tRNA(Gln) + L-glutamate + ADP + phosphate + H(+). The enzyme catalyses L-aspartyl-tRNA(Asn) + L-glutamine + ATP + H2O = L-asparaginyl-tRNA(Asn) + L-glutamate + ADP + phosphate + 2 H(+). In terms of biological role, allows the formation of correctly charged Asn-tRNA(Asn) or Gln-tRNA(Gln) through the transamidation of misacylated Asp-tRNA(Asn) or Glu-tRNA(Gln) in organisms which lack either or both of asparaginyl-tRNA or glutaminyl-tRNA synthetases. The reaction takes place in the presence of glutamine and ATP through an activated phospho-Asp-tRNA(Asn) or phospho-Glu-tRNA(Gln). This Pseudomonas aeruginosa (strain LESB58) protein is Aspartyl/glutamyl-tRNA(Asn/Gln) amidotransferase subunit B.